Consider the following 584-residue polypeptide: Galectin-3-binding protein (584 aa).

Residues 1–18 (MTPPRLFWVWLLVAGTQG) form the signal peptide. Residues 24–124 (MRLADGGATN…HERDAGVVCT (101 aa)) form the SRCR domain. Disulfide bonds link Cys-49–Cys-113, Cys-62–Cys-123, and Cys-93–Cys-103. Asn-69 is a glycosylation site (N-linked (GlcNAc...) asparagine). N-linked (GlcNAc...) asparagine glycans are attached at residues Asn-125 and Asn-192. Residues 153 to 221 (CDLSISVNVQ…FYSRRIDITL (69 aa)) enclose the BTB domain. A BACK domain is found at 260-359 (PLDLYAYAVA…MLPEELFELQ (100 aa)). N-linked (GlcNAc...) asparagine glycosylation is found at Asn-361, Asn-397, Asn-550, and Asn-579.

As to quaternary structure, homodimers and homomultimers. The multimers form ring-like structures with a diameter of 30-40 nm. Binds LGALS1 and LGALS3. Binds ITGB1, COL4A1, COL5A1, COL6A1, FN1 and NID. Interacts with the gamma-tubulin ring complex (gamma-TuRC), composed of gamma-tubulin, TUBGCP2, TUBGCP3, TUBGCP4, TUBGCP5 and TUBGCP6. The unglycosylated form interacts with PDE4DIP; this interaction, which is PDE4DIP isoform-specific, may connect a pericentrosomal complex, made of AKAP9, CDK5RAP2, EB1/MAPRE1 and PDE4DIP, to the gamma-tubulin ring complex (gamma-TuRC) to promote microtubule assembly and acetylation.

It localises to the secreted. The protein localises to the extracellular space. The protein resides in the extracellular matrix. Promotes integrin-mediated cell adhesion. May stimulate host defense against viruses and tumor cells. In Pongo abelii (Sumatran orangutan), this protein is Galectin-3-binding protein (LGALS3BP).